A 465-amino-acid chain; its full sequence is tRNA modification GTPase MnmE (465 aa).

3 residues coordinate (6S)-5-formyl-5,6,7,8-tetrahydrofolate: arginine 21, glutamate 85, and lysine 124. The TrmE-type G domain maps to glycine 220–histidine 387. Asparagine 230 provides a ligand contact to K(+). Residues asparagine 230–threonine 235, serine 249–threonine 255, aspartate 274–glycine 277, and asparagine 337–aspartate 340 each bind GTP. Serine 234 is a binding site for Mg(2+). K(+)-binding residues include serine 249, isoleucine 251, and threonine 254. Position 255 (threonine 255) interacts with Mg(2+). Lysine 465 is a binding site for (6S)-5-formyl-5,6,7,8-tetrahydrofolate.

It belongs to the TRAFAC class TrmE-Era-EngA-EngB-Septin-like GTPase superfamily. TrmE GTPase family. As to quaternary structure, homodimer. Heterotetramer of two MnmE and two MnmG subunits. The cofactor is K(+).

It localises to the cytoplasm. Its function is as follows. Exhibits a very high intrinsic GTPase hydrolysis rate. Involved in the addition of a carboxymethylaminomethyl (cmnm) group at the wobble position (U34) of certain tRNAs, forming tRNA-cmnm(5)s(2)U34. The polypeptide is tRNA modification GTPase MnmE (Bacteroides thetaiotaomicron (strain ATCC 29148 / DSM 2079 / JCM 5827 / CCUG 10774 / NCTC 10582 / VPI-5482 / E50)).